A 730-amino-acid polypeptide reads, in one-letter code: Elongation factor 2 (730 aa).

One can recognise a tr-type G domain in the interval Leu19–Tyr229. GTP is bound by residues Ala28–Thr35, Asp94–His98, and Asn148–Asp151. His596 bears the Diphthamide mark.

Belongs to the TRAFAC class translation factor GTPase superfamily. Classic translation factor GTPase family. EF-G/EF-2 subfamily.

It is found in the cytoplasm. Functionally, catalyzes the GTP-dependent ribosomal translocation step during translation elongation. During this step, the ribosome changes from the pre-translocational (PRE) to the post-translocational (POST) state as the newly formed A-site-bound peptidyl-tRNA and P-site-bound deacylated tRNA move to the P and E sites, respectively. Catalyzes the coordinated movement of the two tRNA molecules, the mRNA and conformational changes in the ribosome. The protein is Elongation factor 2 (fusA) of Methanococcoides burtonii (strain DSM 6242 / NBRC 107633 / OCM 468 / ACE-M).